Here is a 649-residue protein sequence, read N- to C-terminus: Exolysin (649 aa).

A helical membrane pass occupies residues 37-57 (LIYTIIVLVVAAVVGLVIFIV). Residues 184–268 (KDIIDNKLRE…KKATDDFKKK (85 aa)) adopt a coiled-coil conformation. Residues 258 to 275 (AKKATDDFKKKKQADKNK) show a composition bias toward basic and acidic residues. The interval 258-325 (AKKATDDFKK…QFQTRDSKGQ (68 aa)) is disordered. A compositionally biased stretch (pro residues) spans 278–312 (ASKPSPGPKPAPKPSPGPKPAPKPSPGPKPSPGPS). A catalytic region spans residues 407–649 (GGGGGGGNVS…KNVKISKWSP (243 aa)).

Requires Ca(2+) as cofactor. The cofactor is Mg(2+).

The protein resides in the membrane. It localises to the virion. With respect to regulation, inhibited by Mn(2+), Cu(2+), Co(2+), Fe(2+), Zn(2+), Ni(2+), EDTA and EGTA. In terms of biological role, during viral entry, involved in the degradation of the host cell wall at the site of attachment. This Chlorella (PBCV-1) protein is Exolysin.